Here is a 300-residue protein sequence, read N- to C-terminus: uncharacterized protein (300 aa).

CBS domains are found at residues 10–68 (RFPP…FRDV), 88–148 (FLKY…HVKV), 152–207 (MTSE…EDVL), and 226–284 (ISSK…GVEI).

This is an uncharacterized protein from Thermofilum pendens.